Consider the following 375-residue polypeptide: 23S rRNA (uracil(747)-C(5))-methyltransferase RlmC (375 aa).

4 residues coordinate [4Fe-4S] cluster: Cys3, Cys11, Cys14, and Cys87. Residues Gln212, Phe241, Glu262, and Asn307 each contribute to the S-adenosyl-L-methionine site. The active-site Nucleophile is the Cys334.

The protein belongs to the class I-like SAM-binding methyltransferase superfamily. RNA M5U methyltransferase family. RlmC subfamily.

It catalyses the reaction uridine(747) in 23S rRNA + S-adenosyl-L-methionine = 5-methyluridine(747) in 23S rRNA + S-adenosyl-L-homocysteine + H(+). Catalyzes the formation of 5-methyl-uridine at position 747 (m5U747) in 23S rRNA. This chain is 23S rRNA (uracil(747)-C(5))-methyltransferase RlmC, found in Escherichia coli O17:K52:H18 (strain UMN026 / ExPEC).